Here is a 446-residue protein sequence, read N- to C-terminus: Glucose-6-phosphate isomerase (446 aa).

Catalysis depends on E288, which acts as the Proton donor. Catalysis depends on residues H309 and K423.

The protein belongs to the GPI family.

It is found in the cytoplasm. It catalyses the reaction alpha-D-glucose 6-phosphate = beta-D-fructose 6-phosphate. It participates in carbohydrate biosynthesis; gluconeogenesis. The protein operates within carbohydrate degradation; glycolysis; D-glyceraldehyde 3-phosphate and glycerone phosphate from D-glucose: step 2/4. Functionally, catalyzes the reversible isomerization of glucose-6-phosphate to fructose-6-phosphate. This is Glucose-6-phosphate isomerase from Lactobacillus delbrueckii subsp. bulgaricus (strain ATCC 11842 / DSM 20081 / BCRC 10696 / JCM 1002 / NBRC 13953 / NCIMB 11778 / NCTC 12712 / WDCM 00102 / Lb 14).